We begin with the raw amino-acid sequence, 135 residues long: Fluoride-specific ion channel FluC 2 (135 aa).

4 helical membrane passes run 5–25, 36–56, 68–88, and 100–120; these read VLAA…GLLA, WGTV…METL, PFLG…ITDA, and ALLA…AAAG. Na(+) is bound by residues glycine 76 and threonine 79.

It belongs to the fluoride channel Fluc/FEX (TC 1.A.43) family.

The protein resides in the cell membrane. It catalyses the reaction fluoride(in) = fluoride(out). Na(+) is not transported, but it plays an essential structural role and its presence is essential for fluoride channel function. In terms of biological role, fluoride-specific ion channel. Important for reducing fluoride concentration in the cell, thus reducing its toxicity. This is Fluoride-specific ion channel FluC 2 from Thermobifida fusca (strain YX).